The following is a 339-amino-acid chain: Glucokinase (339 aa).

Residue 16 to 21 coordinates ATP; that stretch reads GDIGGT.

The protein belongs to the bacterial glucokinase family.

The protein resides in the cytoplasm. The enzyme catalyses D-glucose + ATP = D-glucose 6-phosphate + ADP + H(+). The sequence is that of Glucokinase from Sinorhizobium fredii (strain NBRC 101917 / NGR234).